We begin with the raw amino-acid sequence, 322 residues long: Lipoyl synthase (322 aa).

Positions 1–14 are enriched in polar residues; it reads MKTLDENQAPSRQT. A disordered region spans residues 1–30; it reads MKTLDENQAPSRQTPESHRRGAEKLSRIPV. Residues 15 to 26 are compositionally biased toward basic and acidic residues; the sequence is PESHRRGAEKLS. 7 residues coordinate [4Fe-4S] cluster: C70, C75, C81, C96, C100, C103, and S310. One can recognise a Radical SAM core domain in the interval 82-299; that stretch reads FGHGTATFMI…AGYARELGFA (218 aa).

The protein belongs to the radical SAM superfamily. Lipoyl synthase family. [4Fe-4S] cluster is required as a cofactor.

The protein resides in the cytoplasm. The enzyme catalyses [[Fe-S] cluster scaffold protein carrying a second [4Fe-4S](2+) cluster] + N(6)-octanoyl-L-lysyl-[protein] + 2 oxidized [2Fe-2S]-[ferredoxin] + 2 S-adenosyl-L-methionine + 4 H(+) = [[Fe-S] cluster scaffold protein] + N(6)-[(R)-dihydrolipoyl]-L-lysyl-[protein] + 4 Fe(3+) + 2 hydrogen sulfide + 2 5'-deoxyadenosine + 2 L-methionine + 2 reduced [2Fe-2S]-[ferredoxin]. It functions in the pathway protein modification; protein lipoylation via endogenous pathway; protein N(6)-(lipoyl)lysine from octanoyl-[acyl-carrier-protein]: step 2/2. In terms of biological role, catalyzes the radical-mediated insertion of two sulfur atoms into the C-6 and C-8 positions of the octanoyl moiety bound to the lipoyl domains of lipoate-dependent enzymes, thereby converting the octanoylated domains into lipoylated derivatives. The sequence is that of Lipoyl synthase from Methylococcus capsulatus (strain ATCC 33009 / NCIMB 11132 / Bath).